The following is a 371-amino-acid chain: UDP-N-acetylglucosamine--N-acetylmuramyl-(pentapeptide) pyrophosphoryl-undecaprenol N-acetylglucosamine transferase (371 aa).

UDP-N-acetyl-alpha-D-glucosamine is bound by residues 15–17 (TGG), N126, R172, S199, I256, 275–280 (ALTVSE), and Q301.

It belongs to the glycosyltransferase 28 family. MurG subfamily.

Its subcellular location is the cell inner membrane. The enzyme catalyses di-trans,octa-cis-undecaprenyl diphospho-N-acetyl-alpha-D-muramoyl-L-alanyl-D-glutamyl-meso-2,6-diaminopimeloyl-D-alanyl-D-alanine + UDP-N-acetyl-alpha-D-glucosamine = di-trans,octa-cis-undecaprenyl diphospho-[N-acetyl-alpha-D-glucosaminyl-(1-&gt;4)]-N-acetyl-alpha-D-muramoyl-L-alanyl-D-glutamyl-meso-2,6-diaminopimeloyl-D-alanyl-D-alanine + UDP + H(+). Its pathway is cell wall biogenesis; peptidoglycan biosynthesis. Functionally, cell wall formation. Catalyzes the transfer of a GlcNAc subunit on undecaprenyl-pyrophosphoryl-MurNAc-pentapeptide (lipid intermediate I) to form undecaprenyl-pyrophosphoryl-MurNAc-(pentapeptide)GlcNAc (lipid intermediate II). The chain is UDP-N-acetylglucosamine--N-acetylmuramyl-(pentapeptide) pyrophosphoryl-undecaprenol N-acetylglucosamine transferase from Francisella tularensis subsp. tularensis (strain WY96-3418).